The sequence spans 93 residues: Small ribosomal subunit protein uS19 (93 aa).

The protein belongs to the universal ribosomal protein uS19 family.

Its function is as follows. Protein S19 forms a complex with S13 that binds strongly to the 16S ribosomal RNA. The polypeptide is Small ribosomal subunit protein uS19 (Geotalea daltonii (strain DSM 22248 / JCM 15807 / FRC-32) (Geobacter daltonii)).